The primary structure comprises 433 residues: Oxysterol-binding protein-like protein OBPa (433 aa).

Belongs to the OSBP family.

The sequence is that of Oxysterol-binding protein-like protein OBPa (OBPA) from Candida albicans (strain SC5314 / ATCC MYA-2876) (Yeast).